Reading from the N-terminus, the 219-residue chain is Orotate phosphoribosyltransferase (219 aa).

Residue lysine 26 participates in 5-phospho-alpha-D-ribose 1-diphosphate binding. Position 34-35 (34-35) interacts with orotate; that stretch reads FF. 5-phospho-alpha-D-ribose 1-diphosphate contacts are provided by residues 72-73, arginine 98, lysine 99, lysine 102, histidine 104, and 124-132; these read YK and DDVITAGTA. Orotate contacts are provided by threonine 128 and arginine 156.

The protein belongs to the purine/pyrimidine phosphoribosyltransferase family. PyrE subfamily. As to quaternary structure, homodimer. The cofactor is Mg(2+).

It catalyses the reaction orotidine 5'-phosphate + diphosphate = orotate + 5-phospho-alpha-D-ribose 1-diphosphate. It functions in the pathway pyrimidine metabolism; UMP biosynthesis via de novo pathway; UMP from orotate: step 1/2. Its function is as follows. Catalyzes the transfer of a ribosyl phosphate group from 5-phosphoribose 1-diphosphate to orotate, leading to the formation of orotidine monophosphate (OMP). This is Orotate phosphoribosyltransferase from Stenotrophomonas maltophilia (strain K279a).